The primary structure comprises 97 residues: Na(+)/H(+) antiporter subunit F1 (97 aa).

Transmembrane regions (helical) follow at residues 3 to 23 (HNVI…AMLI), 35 to 55 (VVAL…FSIL), and 60 to 80 (YMIV…AVFS).

The protein belongs to the CPA3 antiporters (TC 2.A.63) subunit F family. In terms of assembly, may form a heterooligomeric complex that consists of seven subunits: mnhA1, mnhB1, mnhC1, mnhD1, mnhE1, mnhF1 and mnhG1.

The protein resides in the cell membrane. Mnh complex is a Na(+)/H(+) antiporter involved in Na(+) excretion. This Staphylococcus aureus (strain Mu3 / ATCC 700698) protein is Na(+)/H(+) antiporter subunit F1 (mnhF1).